We begin with the raw amino-acid sequence, 33 residues long: Photosystem II reaction center protein Psb30 (33 aa).

The chain crosses the membrane as a helical span at residues 5–25; the sequence is VVAQLTVLALIVVSGPLVIGL.

The protein belongs to the Psb30/Ycf12 family. As to quaternary structure, PSII is composed of 1 copy each of membrane proteins PsbA, PsbB, PsbC, PsbD, PsbE, PsbF, PsbH, PsbI, PsbJ, PsbK, PsbL, PsbM, PsbT, PsbX, PsbY, PsbZ, Psb30/Ycf12, peripheral proteins of the oxygen-evolving complex and a large number of cofactors. It forms dimeric complexes.

The protein localises to the plastid. It localises to the chloroplast thylakoid membrane. A core subunit of photosystem II (PSII), probably helps stabilize the reaction center. The sequence is that of Photosystem II reaction center protein Psb30 from Zygnema circumcarinatum (Green alga).